We begin with the raw amino-acid sequence, 113 residues long: Pancreatic progenitor cell differentiation and proliferation factor B (113 aa).

This sequence belongs to the PPDPF family.

Functionally, probable regulator of exocrine pancreas development. This is Pancreatic progenitor cell differentiation and proliferation factor B (ppdpf-b) from Xenopus laevis (African clawed frog).